A 315-amino-acid chain; its full sequence is 4-hydroxy-3-methylbut-2-enyl diphosphate reductase (315 aa).

Cysteine 12 lines the [4Fe-4S] cluster pocket. (2E)-4-hydroxy-3-methylbut-2-enyl diphosphate-binding residues include histidine 41 and histidine 74. Histidine 41 and histidine 74 together coordinate dimethylallyl diphosphate. Histidine 41 and histidine 74 together coordinate isopentenyl diphosphate. Residue cysteine 96 participates in [4Fe-4S] cluster binding. (2E)-4-hydroxy-3-methylbut-2-enyl diphosphate is bound at residue histidine 124. Histidine 124 contributes to the dimethylallyl diphosphate binding site. Histidine 124 contributes to the isopentenyl diphosphate binding site. The Proton donor role is filled by glutamate 126. A (2E)-4-hydroxy-3-methylbut-2-enyl diphosphate-binding site is contributed by threonine 168. Cysteine 198 is a binding site for [4Fe-4S] cluster. Residues serine 226, serine 227, asparagine 228, and serine 270 each contribute to the (2E)-4-hydroxy-3-methylbut-2-enyl diphosphate site. Dimethylallyl diphosphate is bound by residues serine 226, serine 227, asparagine 228, and serine 270. Residues serine 226, serine 227, asparagine 228, and serine 270 each contribute to the isopentenyl diphosphate site.

It belongs to the IspH family. Requires [4Fe-4S] cluster as cofactor.

The catalysed reaction is isopentenyl diphosphate + 2 oxidized [2Fe-2S]-[ferredoxin] + H2O = (2E)-4-hydroxy-3-methylbut-2-enyl diphosphate + 2 reduced [2Fe-2S]-[ferredoxin] + 2 H(+). The enzyme catalyses dimethylallyl diphosphate + 2 oxidized [2Fe-2S]-[ferredoxin] + H2O = (2E)-4-hydroxy-3-methylbut-2-enyl diphosphate + 2 reduced [2Fe-2S]-[ferredoxin] + 2 H(+). It participates in isoprenoid biosynthesis; dimethylallyl diphosphate biosynthesis; dimethylallyl diphosphate from (2E)-4-hydroxy-3-methylbutenyl diphosphate: step 1/1. Its pathway is isoprenoid biosynthesis; isopentenyl diphosphate biosynthesis via DXP pathway; isopentenyl diphosphate from 1-deoxy-D-xylulose 5-phosphate: step 6/6. Its function is as follows. Catalyzes the conversion of 1-hydroxy-2-methyl-2-(E)-butenyl 4-diphosphate (HMBPP) into a mixture of isopentenyl diphosphate (IPP) and dimethylallyl diphosphate (DMAPP). Acts in the terminal step of the DOXP/MEP pathway for isoprenoid precursor biosynthesis. In Pseudomonas putida (strain W619), this protein is 4-hydroxy-3-methylbut-2-enyl diphosphate reductase.